The primary structure comprises 289 residues: ATP phosphoribosyltransferase (289 aa).

This sequence belongs to the ATP phosphoribosyltransferase family. Long subfamily. Mg(2+) is required as a cofactor.

It localises to the cytoplasm. It carries out the reaction 1-(5-phospho-beta-D-ribosyl)-ATP + diphosphate = 5-phospho-alpha-D-ribose 1-diphosphate + ATP. It participates in amino-acid biosynthesis; L-histidine biosynthesis; L-histidine from 5-phospho-alpha-D-ribose 1-diphosphate: step 1/9. Feedback inhibited by histidine. Catalyzes the condensation of ATP and 5-phosphoribose 1-diphosphate to form N'-(5'-phosphoribosyl)-ATP (PR-ATP). Has a crucial role in the pathway because the rate of histidine biosynthesis seems to be controlled primarily by regulation of HisG enzymatic activity. This is ATP phosphoribosyltransferase from Koribacter versatilis (strain Ellin345).